A 113-amino-acid polypeptide reads, in one-letter code: U11-theraphotoxin-Hhn1a (113 aa).

The N-terminal stretch at 1 to 21 is a signal peptide; the sequence is MNTVRVTFLLVFVLPVSLGQA. The propeptide occupies 22-74; it reads DKDENRMEMQEKTEQGKSYLDFAENLLLQKLEELEAKLLEEDSEESRNSRQKR. Basic and acidic residues predominate over residues 60–69; sequence LEEDSEESRN. The interval 60-83 is disordered; that stretch reads LEEDSEESRNSRQKRCIGEGVPCD. Cystine bridges form between Cys75/Cys90, Cys82/Cys95, and Cys89/Cys110.

Belongs to the neurotoxin 14 (magi-1) family. 01 (HNTX-16) subfamily. Expressed by the venom gland.

It is found in the secreted. Functionally, probable ion channel inhibitor. In Cyriopagopus hainanus (Chinese bird spider), this protein is U11-theraphotoxin-Hhn1a.